Consider the following 306-residue polypeptide: tRNA pseudouridine synthase B (306 aa).

Asp-43 (nucleophile) is an active-site residue.

This sequence belongs to the pseudouridine synthase TruB family. Type 1 subfamily.

It catalyses the reaction uridine(55) in tRNA = pseudouridine(55) in tRNA. Functionally, responsible for synthesis of pseudouridine from uracil-55 in the psi GC loop of transfer RNAs. The sequence is that of tRNA pseudouridine synthase B from Heliobacterium modesticaldum (strain ATCC 51547 / Ice1).